The following is a 293-amino-acid chain: Probable porphobilinogen deaminase (293 aa).

Cysteine 233 is modified (S-(dipyrrolylmethanemethyl)cysteine).

It belongs to the HMBS family. The cofactor is dipyrromethane.

It carries out the reaction 4 porphobilinogen + H2O = hydroxymethylbilane + 4 NH4(+). It functions in the pathway porphyrin-containing compound metabolism; protoporphyrin-IX biosynthesis; coproporphyrinogen-III from 5-aminolevulinate: step 2/4. Tetrapolymerization of the monopyrrole PBG into the hydroxymethylbilane pre-uroporphyrinogen in several discrete steps. The chain is Probable porphobilinogen deaminase from Saccharolobus islandicus (strain L.S.2.15 / Lassen #1) (Sulfolobus islandicus).